The sequence spans 382 residues: Na(+)/H(+) antiporter NhaA 1 (382 aa).

Transmembrane regions (helical) follow at residues 10–30 (EFSI…NISP), 45–65 (FSFH…IAAA), 87–107 (LLAT…LNAL), 116–136 (GWGI…SLVF), 145–165 (FLLL…ALFY), 170–190 (LPAA…AALL), 211–231 (AGLF…VPFL), 252–272 (LASF…LFGL), 275–295 (AGVT…SLVI), 326–346 (LVGL…GEAF), and 353–373 (GAAK…LAAG).

Belongs to the NhaA Na(+)/H(+) (TC 2.A.33) antiporter family.

The protein resides in the cell inner membrane. It carries out the reaction Na(+)(in) + 2 H(+)(out) = Na(+)(out) + 2 H(+)(in). Functionally, na(+)/H(+) antiporter that extrudes sodium in exchange for external protons. The polypeptide is Na(+)/H(+) antiporter NhaA 1 (Pelobacter propionicus (strain DSM 2379 / NBRC 103807 / OttBd1)).